The primary structure comprises 108 residues: Tetrahydromethanopterin S-methyltransferase subunit B (108 aa).

A helical transmembrane segment spans residues 79 to 99 (GMFFGFWVTMAILVLVTILAV).

Belongs to the MtrB family. The complex is composed of 8 subunits; MtrA, MtrB, MtrC, MtrD, MtrE, MtrF, MtrG and MtrH.

The protein localises to the cell membrane. It catalyses the reaction 5-methyl-5,6,7,8-tetrahydromethanopterin + coenzyme M + 2 Na(+)(in) = 5,6,7,8-tetrahydromethanopterin + methyl-coenzyme M + 2 Na(+)(out). The protein operates within one-carbon metabolism; methanogenesis from CO(2); methyl-coenzyme M from 5,10-methylene-5,6,7,8-tetrahydromethanopterin: step 2/2. Functionally, part of a complex that catalyzes the formation of methyl-coenzyme M and tetrahydromethanopterin from coenzyme M and methyl-tetrahydromethanopterin. This is an energy-conserving, sodium-ion translocating step. The protein is Tetrahydromethanopterin S-methyltransferase subunit B of Methanococcus maripaludis (strain C7 / ATCC BAA-1331).